We begin with the raw amino-acid sequence, 363 residues long: Aspartate carbamoyltransferase, chloroplastic (363 aa).

Residues 1-21 (MAAARATLPLPRVPAPSPRPQ) are disordered. The transit peptide at 1 to 36 (MAAARATLPLPRVPAPSPRPQLRPFPSLPARRGAVA) directs the protein to the chloroplast. The span at 11-21 (PRVPAPSPRPQ) shows a compositional bias: pro residues. 2 residues coordinate carbamoyl phosphate: R109 and T110. The UMP site is built by R109 and T110. K139 is an L-aspartate binding site. Positions 160, 188, and 191 each coordinate carbamoyl phosphate. The UMP site is built by R160 and H188. UMP-binding residues include R221 and R283. L-aspartate-binding residues include R221 and R283. Positions 323 and 324 each coordinate carbamoyl phosphate.

The protein belongs to the aspartate/ornithine carbamoyltransferase superfamily. ATCase family. As to quaternary structure, homotrimer.

It is found in the plastid. Its subcellular location is the chloroplast. It carries out the reaction carbamoyl phosphate + L-aspartate = N-carbamoyl-L-aspartate + phosphate + H(+). It functions in the pathway pyrimidine metabolism; UMP biosynthesis via de novo pathway; (S)-dihydroorotate from bicarbonate: step 2/3. Feedback inhibited by UMP. Its function is as follows. Catalyzes the condensation of carbamoyl phosphate and aspartate to form carbamoyl aspartate and inorganic phosphate, the committed step in the de novo pyrimidine nucleotide biosynthesis pathway. The protein is Aspartate carbamoyltransferase, chloroplastic (PYRB) of Oryza sativa subsp. japonica (Rice).